Reading from the N-terminus, the 1602-residue chain is MAP kinase-activating death domain protein (1602 aa).

Residues 13 to 267 (YLVIVGARHP…VPVSGQKRVD (255 aa)) enclose the uDENN domain. The span at 105–121 (PKEKAEGGAGPRGKEGA) shows a compositional bias: basic and acidic residues. The interval 105–167 (PKEKAEGGAG…GKRRAKAGNR (63 aa)) is disordered. Positions 126–137 (ASEEAATESSES) are enriched in low complexity. Polar residues predominate over residues 138–156 (GSTLQPPSADSTPDVNQSP). Serine 155 bears the Phosphoserine mark. Residues 157–166 (RGKRRAKAGN) are compositionally biased toward basic residues. Positions 288-428 (RFTLVDFPLH…ESLELKKHLK (141 aa)) constitute a cDENN domain. Residues 430–564 (ALASMSLNTQ…LNPSNYAFQR (135 aa)) enclose the dDENN domain. 2 disordered regions span residues 603 to 635 (ALSV…SSYS) and 676 to 840 (QPQK…NSTE). Residues 614–629 (SDPTDDSGSDSMDYDD) show a composition bias toward acidic residues. A phosphoserine mark is found at serine 688 and serine 691. A compositionally biased stretch (polar residues) spans 688–698 (SENSQENLPLR). Low complexity predominate over residues 699-711 (SSSSTTASSSPST). Residue serine 778 is modified to Phosphoserine. Over residues 789–803 (ESYTPRFSQHASGSR) the composition is skewed to polar residues. 3 positions are modified to phosphoserine: serine 812, serine 817, and serine 819. Positions 826–839 (RASSPNSTVSNNST) are enriched in low complexity. Phosphoserine occurs at positions 857, 861, 895, 900, and 909. Disordered regions lie at residues 870–920 (KGAR…SSEN), 1030–1089 (KEPD…DTRS), and 1113–1231 (TEEK…RSSE). A compositionally biased stretch (polar residues) spans 911–920 (QGRSSNSSEN). A Phosphoserine modification is found at serine 1038. Threonine 1040 and threonine 1045 each carry phosphothreonine. Phosphoserine is present on serine 1089. Positions 1119 to 1134 (QISADSGVSLASASQR) are enriched in polar residues. Residues 1151–1162 (SSSQDSEVSNSS) show a composition bias toward low complexity. The span at 1191–1209 (SRATLSDSEIETNSATSTI) shows a compositional bias: polar residues. At threonine 1194 the chain carries Phosphothreonine. Phosphoserine is present on residues serine 1196 and serine 1225. The 76-residue stretch at 1295 to 1370 (GMDQGPQEMI…GLVYSQQINE (76 aa)) folds into the Death domain.

Belongs to the MADD family. Interacts (via death domain) with TNFRSF1A (via death domain). Interacts with PIDD1. Interacts with YWHAZ. Interacts (via death domain) with KIF1B; links the motor KIF1B to Rab3-carrying vesicles in anterograde synaptic vesicle transport. Interacts with KIF1A. Interacts (via uDENN domain) with RAB3A, RAB3B, RAB3C and RAB3D; the GTP-bound form of the Rab proteins is preferred for interaction. In terms of tissue distribution, expressed in all tissues examined with the highest expression in brain.

Its subcellular location is the cell membrane. The protein localises to the cytoplasm. It localises to the cell projection. It is found in the axon. Guanyl-nucleotide exchange factor that regulates small GTPases of the Rab family. Converts GDP-bound inactive form of RAB27A and RAB27B to the GTP-bound active forms. Converts GDP-bound inactive form of RAB3A, RAB3C and RAB3D to the GTP-bound active forms, GTPases involved in synaptic vesicle exocytosis and vesicle secretion. Plays a role in synaptic vesicle formation and in vesicle trafficking at the neuromuscular junction. Involved in up-regulating a post-docking step of synaptic exocytosis in central synapses. Probably by binding to the motor proteins KIF1B and KIF1A, mediates motor-dependent transport of GTP-RAB3A-positive vesicles to the presynaptic nerve terminals. Plays a role in TNFA-mediated activation of the MAPK pathway, including ERK1/2. May link TNFRSF1A with MAP kinase activation. May be involved in the regulation of TNFA-induced apoptosis. The chain is MAP kinase-activating death domain protein from Rattus norvegicus (Rat).